Reading from the N-terminus, the 118-residue chain is Large ribosomal subunit protein uL18 (118 aa).

The segment at 1–24 (MISKPDKNKTRQRRHARVRGKISG) is disordered. The segment covering 10–20 (TRQRRHARVRG) has biased composition (basic residues).

This sequence belongs to the universal ribosomal protein uL18 family. Part of the 50S ribosomal subunit; part of the 5S rRNA/L5/L18/L25 subcomplex. Contacts the 5S and 23S rRNAs.

In terms of biological role, this is one of the proteins that bind and probably mediate the attachment of the 5S RNA into the large ribosomal subunit, where it forms part of the central protuberance. In Lactiplantibacillus plantarum (strain ATCC BAA-793 / NCIMB 8826 / WCFS1) (Lactobacillus plantarum), this protein is Large ribosomal subunit protein uL18.